Here is a 376-residue protein sequence, read N- to C-terminus: Probable dual-specificity RNA methyltransferase RlmN (376 aa).

Residues 1–25 (MSDSERTSLPLVFDEPRGRKKPPRH) are disordered. Glu-113 serves as the catalytic Proton acceptor. The Radical SAM core domain maps to 119-362 (YPDRATMCVS…PTTVRDTRGR (244 aa)). Cys-126 and Cys-368 are oxidised to a cystine. [4Fe-4S] cluster is bound by residues Cys-133, Cys-137, and Cys-140. S-adenosyl-L-methionine-binding positions include 188 to 189 (GE), Ser-222, 245 to 247 (SLH), and Asn-325. The S-methylcysteine intermediate role is filled by Cys-368.

It belongs to the radical SAM superfamily. RlmN family. It depends on [4Fe-4S] cluster as a cofactor.

It localises to the cytoplasm. It catalyses the reaction adenosine(2503) in 23S rRNA + 2 reduced [2Fe-2S]-[ferredoxin] + 2 S-adenosyl-L-methionine = 2-methyladenosine(2503) in 23S rRNA + 5'-deoxyadenosine + L-methionine + 2 oxidized [2Fe-2S]-[ferredoxin] + S-adenosyl-L-homocysteine. The enzyme catalyses adenosine(37) in tRNA + 2 reduced [2Fe-2S]-[ferredoxin] + 2 S-adenosyl-L-methionine = 2-methyladenosine(37) in tRNA + 5'-deoxyadenosine + L-methionine + 2 oxidized [2Fe-2S]-[ferredoxin] + S-adenosyl-L-homocysteine. Specifically methylates position 2 of adenine 2503 in 23S rRNA and position 2 of adenine 37 in tRNAs. This chain is Probable dual-specificity RNA methyltransferase RlmN, found in Nocardioides sp. (strain ATCC BAA-499 / JS614).